The sequence spans 444 residues: Adenylosuccinate synthetase (444 aa).

GTP-binding positions include 12-18 and 40-42; these read GDEGKGK and GHT. The active-site Proton acceptor is the Asp-13. 2 residues coordinate Mg(2+): Asp-13 and Gly-40. IMP contacts are provided by residues 13–16, 38–41, Thr-128, Arg-142, Gln-223, Thr-238, and Arg-302; these read DEGK and NAGH. His-41 acts as the Proton donor in catalysis. 298–304 serves as a coordination point for substrate; that stretch reads TTTGRRR. GTP contacts are provided by residues Arg-304, 330-332, and 412-414; these read KLD and SLG.

Belongs to the adenylosuccinate synthetase family. As to quaternary structure, homodimer. Requires Mg(2+) as cofactor.

It localises to the cytoplasm. It catalyses the reaction IMP + L-aspartate + GTP = N(6)-(1,2-dicarboxyethyl)-AMP + GDP + phosphate + 2 H(+). It functions in the pathway purine metabolism; AMP biosynthesis via de novo pathway; AMP from IMP: step 1/2. Functionally, plays an important role in the de novo pathway of purine nucleotide biosynthesis. Catalyzes the first committed step in the biosynthesis of AMP from IMP. This is Adenylosuccinate synthetase from Synechococcus elongatus (strain ATCC 33912 / PCC 7942 / FACHB-805) (Anacystis nidulans R2).